Consider the following 159-residue polypeptide: Phosphopantetheine adenylyltransferase (159 aa).

Thr-10 provides a ligand contact to substrate. ATP contacts are provided by residues 10–11 (TF) and His-18. Lys-42, Met-74, and Arg-88 together coordinate substrate. Residues 89-91 (GLR), Glu-99, and 124-130 (WSFISSS) each bind ATP.

This sequence belongs to the bacterial CoaD family. Homohexamer. It depends on Mg(2+) as a cofactor.

Its subcellular location is the cytoplasm. The enzyme catalyses (R)-4'-phosphopantetheine + ATP + H(+) = 3'-dephospho-CoA + diphosphate. The protein operates within cofactor biosynthesis; coenzyme A biosynthesis; CoA from (R)-pantothenate: step 4/5. Reversibly transfers an adenylyl group from ATP to 4'-phosphopantetheine, yielding dephospho-CoA (dPCoA) and pyrophosphate. The protein is Phosphopantetheine adenylyltransferase of Yersinia pseudotuberculosis serotype I (strain IP32953).